A 218-amino-acid chain; its full sequence is MKFFIDTANLAQIKEAQALGVLDGVTTNPSLMAKEGITGKNNILKHYVDICNIVEGDVSAEVNAMDYDGMIREGEELAELHDQIVVKLPMTKEGIMACKYFSDRGIRTNVTLIFSAGQALLAAKAGATYCSPFIGRLDDISTDGLNLIQEIRDIYDNYGFETQILAASVRHTMHVVNCAKIGADVMTGPLSSILGLLKHPLTDIGIAQFIADFEKGNR.

Lysine 87 (schiff-base intermediate with substrate) is an active-site residue.

The protein belongs to the transaldolase family. Type 3B subfamily.

The protein resides in the cytoplasm. It carries out the reaction D-sedoheptulose 7-phosphate + D-glyceraldehyde 3-phosphate = D-erythrose 4-phosphate + beta-D-fructose 6-phosphate. It functions in the pathway carbohydrate degradation; pentose phosphate pathway; D-glyceraldehyde 3-phosphate and beta-D-fructose 6-phosphate from D-ribose 5-phosphate and D-xylulose 5-phosphate (non-oxidative stage): step 2/3. In terms of biological role, transaldolase is important for the balance of metabolites in the pentose-phosphate pathway. This is Probable transaldolase from Flavobacterium psychrophilum (strain ATCC 49511 / DSM 21280 / CIP 103535 / JIP02/86).